The primary structure comprises 437 residues: Homogentisate 1,2-dioxygenase (437 aa).

Positions 15–34 are disordered; the sequence is NEHATSDPRVPDALPVGQNS. Residues H336, E342, and H372 each coordinate Fe cation.

This sequence belongs to the homogentisate dioxygenase family. The cofactor is Fe cation. Expressed in the hypodermis and intestine.

It carries out the reaction homogentisate + O2 = 4-maleylacetoacetate + H(+). It functions in the pathway amino-acid degradation; L-phenylalanine degradation; acetoacetate and fumarate from L-phenylalanine: step 4/6. Its function is as follows. Plays a role in the tyrosine degradation pathway. In Caenorhabditis elegans, this protein is Homogentisate 1,2-dioxygenase.